A 266-amino-acid polypeptide reads, in one-letter code: Ribonuclease HII (266 aa).

The tract at residues His19–Val38 is disordered. An RNase H type-2 domain is found at Trp58–Pro246. The a divalent metal cation site is built by Asp64, Glu65, and Asp155.

Belongs to the RNase HII family. The cofactor is Mn(2+). Mg(2+) is required as a cofactor.

It localises to the cytoplasm. It carries out the reaction Endonucleolytic cleavage to 5'-phosphomonoester.. Its function is as follows. Endonuclease that specifically degrades the RNA of RNA-DNA hybrids. This Rhodopseudomonas palustris (strain BisB18) protein is Ribonuclease HII.